We begin with the raw amino-acid sequence, 545 residues long: Calcium-dependent protein kinase 6 (545 aa).

Gly-2 carries the N-myristoyl glycine lipid modification. The segment covering Cys-34–Ser-43 has biased composition (low complexity). Residues Cys-34 to Ser-58 are disordered. The 259-residue stretch at Tyr-74–Val-332 folds into the Protein kinase domain. Residues Leu-80–Thr-88 and Lys-103 contribute to the ATP site. Asp-198 serves as the catalytic Proton acceptor. The interval Ala-338–Ile-368 is autoinhibitory domain. EF-hand domains lie at Glu-375–Asn-410, Leu-411–Leu-446, Glu-447–Ala-482, and Ile-486–Asp-516. Ca(2+) is bound by residues Asp-388, Asp-390, Ser-392, Glu-399, Asp-424, Asp-426, Ser-428, Thr-430, Glu-435, Asp-460, Asp-462, Ser-464, Tyr-466, Glu-471, Asp-494, Asp-496, Asp-498, Arg-500, and Glu-505. Positions Gly-526 to Arg-545 are disordered. Low complexity predominate over residues Pro-528–Arg-545.

It belongs to the protein kinase superfamily. Ser/Thr protein kinase family. CDPK subfamily.

It is found in the membrane. The enzyme catalyses L-seryl-[protein] + ATP = O-phospho-L-seryl-[protein] + ADP + H(+). It catalyses the reaction L-threonyl-[protein] + ATP = O-phospho-L-threonyl-[protein] + ADP + H(+). Activated by calcium. Autophosphorylation may play an important role in the regulation of the kinase activity. Its function is as follows. May play a role in signal transduction pathways that involve calcium as a second messenger. This chain is Calcium-dependent protein kinase 6, found in Oryza sativa subsp. japonica (Rice).